The following is a 563-amino-acid chain: Arginine--tRNA ligase (563 aa).

A 'HIGH' region motif is present at residues 121 to 131; that stretch reads PNIAKPFSIGH.

It belongs to the class-I aminoacyl-tRNA synthetase family. In terms of assembly, monomer.

It is found in the cytoplasm. It carries out the reaction tRNA(Arg) + L-arginine + ATP = L-arginyl-tRNA(Arg) + AMP + diphosphate. In Streptococcus pyogenes serotype M12 (strain MGAS2096), this protein is Arginine--tRNA ligase.